The sequence spans 129 residues: MNKVQNIIDQLKDLTLLEAADLVKQIEETFNVSATAAAAPINMVAATAGAGSAEAVEEKTEFDLILEDVPADKKIAVLKVVRGLTGLGLKEAKDLVEAAPKPIKEGMSKADAEAGKKQLEEAGAKATLK.

The segment covering 101-123 (KPIKEGMSKADAEAGKKQLEEAG) has biased composition (basic and acidic residues). The tract at residues 101-129 (KPIKEGMSKADAEAGKKQLEEAGAKATLK) is disordered.

This sequence belongs to the bacterial ribosomal protein bL12 family. Homodimer. Part of the ribosomal stalk of the 50S ribosomal subunit. Forms a multimeric L10(L12)X complex, where L10 forms an elongated spine to which 2 to 4 L12 dimers bind in a sequential fashion. Binds GTP-bound translation factors.

It is found in the plastid. Its subcellular location is the chloroplast. Its function is as follows. Forms part of the ribosomal stalk which helps the ribosome interact with GTP-bound translation factors. Is thus essential for accurate translation. The chain is Large ribosomal subunit protein bL12c from Guillardia theta (Cryptophyte).